The primary structure comprises 156 residues: ATP synthase subunit b (156 aa).

Residues 7-27 form a helical membrane-spanning segment; the sequence is LIGQLIAFALFVAFCMKFVWP.

This sequence belongs to the ATPase B chain family. F-type ATPases have 2 components, F(1) - the catalytic core - and F(0) - the membrane proton channel. F(1) has five subunits: alpha(3), beta(3), gamma(1), delta(1), epsilon(1). F(0) has three main subunits: a(1), b(2) and c(10-14). The alpha and beta chains form an alternating ring which encloses part of the gamma chain. F(1) is attached to F(0) by a central stalk formed by the gamma and epsilon chains, while a peripheral stalk is formed by the delta and b chains.

It localises to the cell inner membrane. Functionally, f(1)F(0) ATP synthase produces ATP from ADP in the presence of a proton or sodium gradient. F-type ATPases consist of two structural domains, F(1) containing the extramembraneous catalytic core and F(0) containing the membrane proton channel, linked together by a central stalk and a peripheral stalk. During catalysis, ATP synthesis in the catalytic domain of F(1) is coupled via a rotary mechanism of the central stalk subunits to proton translocation. In terms of biological role, component of the F(0) channel, it forms part of the peripheral stalk, linking F(1) to F(0). The polypeptide is ATP synthase subunit b (Actinobacillus pleuropneumoniae serotype 7 (strain AP76)).